The primary structure comprises 254 residues: 4-hydroxy-tetrahydrodipicolinate reductase (254 aa).

An NAD(+)-binding site is contributed by 7-12; it reads GASGRI. An NADP(+)-binding site is contributed by R35. NAD(+) contacts are provided by residues 91 to 93 and 115 to 118; these read GTT and AHNM. The active-site Proton donor/acceptor is the H147. A (S)-2,3,4,5-tetrahydrodipicolinate-binding site is contributed by H148. Residue K151 is the Proton donor of the active site. (S)-2,3,4,5-tetrahydrodipicolinate is bound at residue 157-158; it reads GT.

It belongs to the DapB family.

It localises to the cytoplasm. The catalysed reaction is (S)-2,3,4,5-tetrahydrodipicolinate + NAD(+) + H2O = (2S,4S)-4-hydroxy-2,3,4,5-tetrahydrodipicolinate + NADH + H(+). The enzyme catalyses (S)-2,3,4,5-tetrahydrodipicolinate + NADP(+) + H2O = (2S,4S)-4-hydroxy-2,3,4,5-tetrahydrodipicolinate + NADPH + H(+). It participates in amino-acid biosynthesis; L-lysine biosynthesis via DAP pathway; (S)-tetrahydrodipicolinate from L-aspartate: step 4/4. Functionally, catalyzes the conversion of 4-hydroxy-tetrahydrodipicolinate (HTPA) to tetrahydrodipicolinate. The sequence is that of 4-hydroxy-tetrahydrodipicolinate reductase from Helicobacter pylori (strain ATCC 700392 / 26695) (Campylobacter pylori).